The following is a 581-amino-acid chain: Zinc finger protein 674 (581 aa).

One can recognise a KRAB domain in the interval 8–79 (LTFKDVFVDF…DGGTPVRTCA (72 aa)). C2H2-type zinc fingers lie at residues 224 to 246 (YKCT…QRTH), 252 to 274 (YECC…QRTH), 280 to 302 (YECS…QRTH), and 308 to 330 (FVCD…EKTH). The segment covering 357–371 (PQCSEHGKASDEKPS) has biased composition (basic and acidic residues). Positions 357-377 (PQCSEHGKASDEKPSPTKHWR) are disordered. 7 consecutive C2H2-type zinc fingers follow at residues 385–407 (YECS…QRIH), 413–435 (YECS…HRTH), 441–463 (YECR…QRMH), 469–491 (YKCN…QRIH), 497–519 (YECT…QRIH), 525–547 (YKCS…HRTH), and 553–575 (YECR…QRSH).

Belongs to the krueppel C2H2-type zinc-finger protein family. As to expression, expressed in testis.

Its subcellular location is the nucleus. Its function is as follows. May be involved in transcriptional regulation. In Homo sapiens (Human), this protein is Zinc finger protein 674 (ZNF674).